The primary structure comprises 210 residues: Probable GTP-binding protein EngB (210 aa).

Residues 29 to 203 (NGIEIAFAGR…SNKLDSWFAP (175 aa)) form the EngB-type G domain. Residues 37 to 44 (GRSNAGKS), 64 to 68 (GRTQL), 82 to 85 (DLPG), 149 to 152 (TKAD), and 181 to 184 (IYSA) each bind GTP. Mg(2+)-binding residues include Ser-44 and Thr-66.

The protein belongs to the TRAFAC class TrmE-Era-EngA-EngB-Septin-like GTPase superfamily. EngB GTPase family. Mg(2+) is required as a cofactor.

Necessary for normal cell division and for the maintenance of normal septation. The chain is Probable GTP-binding protein EngB from Haemophilus ducreyi (strain 35000HP / ATCC 700724).